We begin with the raw amino-acid sequence, 436 residues long: Prenyltransferase nscD (436 aa).

Belongs to the tryptophan dimethylallyltransferase family.

Its pathway is secondary metabolite biosynthesis. Its function is as follows. Prenyltransferase; part of the gene cluster that mediates the biosynthesis of neosartoricin B, a prenylated anthracenone that probably exhibits T-cell antiproliferative activity, suggestive of a physiological role as an immunosuppressive agent. The non-reducing polyketide synthase nscA probably synthesizes and cyclizes the decaketide backbone. The hydrolase nscB then mediates the product release through hydrolysis followed by spontaneous decarboxylation. The prenyltransferase nscD catalyzes the addition of the dimethylallyl group to the aromatic C5. The FAD-dependent monooxygenase nscC is then responsible for the stereospecific hydroxylation at C2. Neosartoricin B can be converted into two additional compounds neosartoricins C and D. Neosartoricin C is a spirocyclic compound that is cyclized through the attack of C3 hydroxyl on C14, followed by dehydration. On the other hand, neosartoricin D is a further cyclized compound in which attack of C2 on C14 in neosartoricin C results in the formation of the acetal-containing dioxabicyclo-octanone ring. Both of these compounds are novel and possibly represent related metabolites of the gene cluster. In Arthroderma benhamiae (strain ATCC MYA-4681 / CBS 112371) (Trichophyton mentagrophytes), this protein is Prenyltransferase nscD.